The chain runs to 203 residues: Holliday junction branch migration complex subunit RuvA (203 aa).

Residues 1–64 (MIGRLNGILV…EDAQLLYGFI (64 aa)) are domain I. The domain II stretch occupies residues 65-143 (TKQERALFRL…SLLEASVGNE (79 aa)). The interval 144 to 154 (REFMLQTNYTA) is flexible linker. The domain III stretch occupies residues 155–203 (PAANAEEDAISALVSLGYKPPQASRAVSKAYKEGMDTETLIKLALKSML).

It belongs to the RuvA family. Homotetramer. Forms an RuvA(8)-RuvB(12)-Holliday junction (HJ) complex. HJ DNA is sandwiched between 2 RuvA tetramers; dsDNA enters through RuvA and exits via RuvB. An RuvB hexamer assembles on each DNA strand where it exits the tetramer. Each RuvB hexamer is contacted by two RuvA subunits (via domain III) on 2 adjacent RuvB subunits; this complex drives branch migration. In the full resolvosome a probable DNA-RuvA(4)-RuvB(12)-RuvC(2) complex forms which resolves the HJ.

Its subcellular location is the cytoplasm. Its function is as follows. The RuvA-RuvB-RuvC complex processes Holliday junction (HJ) DNA during genetic recombination and DNA repair, while the RuvA-RuvB complex plays an important role in the rescue of blocked DNA replication forks via replication fork reversal (RFR). RuvA specifically binds to HJ cruciform DNA, conferring on it an open structure. The RuvB hexamer acts as an ATP-dependent pump, pulling dsDNA into and through the RuvAB complex. HJ branch migration allows RuvC to scan DNA until it finds its consensus sequence, where it cleaves and resolves the cruciform DNA. This chain is Holliday junction branch migration complex subunit RuvA, found in Shewanella denitrificans (strain OS217 / ATCC BAA-1090 / DSM 15013).